Consider the following 440-residue polypeptide: ATP-dependent protease ATPase subunit HslU (440 aa).

Residues Val-18, 60–65, Asp-253, Glu-318, and Arg-390 contribute to the ATP site; that span reads GVGKTE.

The protein belongs to the ClpX chaperone family. HslU subfamily. As to quaternary structure, a double ring-shaped homohexamer of HslV is capped on each side by a ring-shaped HslU homohexamer. The assembly of the HslU/HslV complex is dependent on binding of ATP.

The protein localises to the cytoplasm. Its function is as follows. ATPase subunit of a proteasome-like degradation complex; this subunit has chaperone activity. The binding of ATP and its subsequent hydrolysis by HslU are essential for unfolding of protein substrates subsequently hydrolyzed by HslV. HslU recognizes the N-terminal part of its protein substrates and unfolds these before they are guided to HslV for hydrolysis. This chain is ATP-dependent protease ATPase subunit HslU, found in Methylococcus capsulatus (strain ATCC 33009 / NCIMB 11132 / Bath).